A 346-amino-acid polypeptide reads, in one-letter code: Protein STAR1 (346 aa).

Residues 23 to 48 form a disordered region; that stretch reads QRPPPNGTVHACSKSRPPQLEPGKVG. One can recognise an ABC transporter domain in the interval 112-344; the sequence is IRVRGLTRRS…KHPMARRFLE (233 aa). Residue 146–153 participates in ATP binding; the sequence is GPSGSGKS.

The protein belongs to the ABC transporter superfamily. ABCI family. As to quaternary structure, interacts with STAR2. As to expression, expressed in roots.

It localises to the membrane. Associates with STAR2 to form a functional transmembrane ABC transporter required for detoxification of aluminum (Al) in roots. Can specifically transport UDP-glucose. The sequence is that of Protein STAR1 from Oryza sativa subsp. japonica (Rice).